A 334-amino-acid chain; its full sequence is Formamidase (334 aa).

Residues 14 to 260 form the CN hydrolase domain; it reads MLMGLVQYPV…WEIVTAEVFP (247 aa). E60 (proton acceptor) is an active-site residue. K133 acts as the Proton donor in catalysis. C166 serves as the catalytic Nucleophile.

Belongs to the carbon-nitrogen hydrolase superfamily. Aliphatic amidase family.

The catalysed reaction is formamide + H2O = formate + NH4(+). Is an aliphatic amidase with a restricted substrate specificity, as it only hydrolyzes formamide. The sequence is that of Formamidase from Nitratidesulfovibrio vulgaris (strain DP4) (Desulfovibrio vulgaris).